Here is a 224-residue protein sequence, read N- to C-terminus: Glycerol-3-phosphate acyltransferase (224 aa).

The next 6 membrane-spanning stretches (helical) occupy residues F4 to N24, L60 to V80, S88 to W108, I124 to I144, I149 to W169, and W182 to H202.

It belongs to the PlsY family. As to quaternary structure, probably interacts with PlsX.

The protein localises to the cell membrane. The enzyme catalyses an acyl phosphate + sn-glycerol 3-phosphate = a 1-acyl-sn-glycero-3-phosphate + phosphate. Its pathway is lipid metabolism; phospholipid metabolism. Its function is as follows. Catalyzes the transfer of an acyl group from acyl-phosphate (acyl-PO(4)) to glycerol-3-phosphate (G3P) to form lysophosphatidic acid (LPA). This enzyme utilizes acyl-phosphate as fatty acyl donor, but not acyl-CoA or acyl-ACP. The polypeptide is Glycerol-3-phosphate acyltransferase (Mycoplasmopsis pulmonis (strain UAB CTIP) (Mycoplasma pulmonis)).